The sequence spans 58 residues: Small ribosomal subunit protein bS21 (58 aa).

The disordered stretch occupies residues 24-58 (TKAGTLQEARKREHYEKPSVKRKRKSEAARKRKKI). The span at 31–42 (EARKREHYEKPS) shows a compositional bias: basic and acidic residues. The segment covering 43–58 (VKRKRKSEAARKRKKI) has biased composition (basic residues).

Belongs to the bacterial ribosomal protein bS21 family.

The polypeptide is Small ribosomal subunit protein bS21 (Streptococcus thermophilus (strain CNRZ 1066)).